Consider the following 150-residue polypeptide: Depactin (150 aa).

The ADF-H domain occupies 3–148; the sequence is SGTALDENVK…SEEAIGDKIK (146 aa).

The protein belongs to the actin-binding proteins ADF family.

Functionally, depactin interacts with actin at some of its 12 N-terminal residues and 20 C-terminal residues. Binds to actin monomers from filaments and in solution. The polypeptide is Depactin (Asterias amurensis (Northern Pacific seastar)).